The primary structure comprises 251 residues: Imidazole glycerol phosphate synthase subunit HisF (251 aa).

Residues Asp11 and Asp130 contribute to the active site.

It belongs to the HisA/HisF family. In terms of assembly, heterodimer of HisH and HisF.

It is found in the cytoplasm. It catalyses the reaction 5-[(5-phospho-1-deoxy-D-ribulos-1-ylimino)methylamino]-1-(5-phospho-beta-D-ribosyl)imidazole-4-carboxamide + L-glutamine = D-erythro-1-(imidazol-4-yl)glycerol 3-phosphate + 5-amino-1-(5-phospho-beta-D-ribosyl)imidazole-4-carboxamide + L-glutamate + H(+). Its pathway is amino-acid biosynthesis; L-histidine biosynthesis; L-histidine from 5-phospho-alpha-D-ribose 1-diphosphate: step 5/9. Functionally, IGPS catalyzes the conversion of PRFAR and glutamine to IGP, AICAR and glutamate. The HisF subunit catalyzes the cyclization activity that produces IGP and AICAR from PRFAR using the ammonia provided by the HisH subunit. The sequence is that of Imidazole glycerol phosphate synthase subunit HisF from Chloroherpeton thalassium (strain ATCC 35110 / GB-78).